The sequence spans 432 residues: Trigger factor (432 aa).

Positions 161–246 (EDRVTIDFTG…LKKVEERELP (86 aa)) constitute a PPIase FKBP-type domain.

It belongs to the FKBP-type PPIase family. Tig subfamily. As to quaternary structure, homodimer and monomer. In vivo most of the ribosomes are in complex with monomeric TF. Uncomplexed TF, however, is in a monomer-dimer equilibrium with approximately two thirds of TF existing in a dimeric state.

It localises to the cytoplasm. It catalyses the reaction [protein]-peptidylproline (omega=180) = [protein]-peptidylproline (omega=0). Involved in protein export. Acts as a chaperone by maintaining the newly synthesized protein in an open conformation. Functions as a peptidyl-prolyl cis-trans isomerase. The sequence is that of Trigger factor from Shigella boydii serotype 18 (strain CDC 3083-94 / BS512).